Reading from the N-terminus, the 533-residue chain is CTP synthase (533 aa).

Residues 1 to 264 are amidoligase domain; that stretch reads MKYIFVTGGV…GKLVTEKLNL (264 aa). Ser-12 contributes to the CTP binding site. Ser-12 serves as a coordination point for UTP. ATP is bound by residues 13–18 and Asp-70; that span reads SLGKGI. 2 residues coordinate Mg(2+): Asp-70 and Glu-138. CTP is bound by residues 145 to 147, 185 to 190, and Lys-221; these read DIE and KTKPTQ. UTP is bound by residues 185 to 190 and Lys-221; that span reads KTKPTQ. ATP is bound at residue 237–239; the sequence is KDA. One can recognise a Glutamine amidotransferase type-1 domain in the interval 289–533; that stretch reads TIGIVGKYIE…HGLVKASIEK (245 aa). Gly-357 is a binding site for L-glutamine. The Nucleophile; for glutamine hydrolysis role is filled by Cys-384. Residues 385–388, Glu-407, and Arg-464 each bind L-glutamine; that span reads LGMQ. Residues His-509 and Glu-511 contribute to the active site.

This sequence belongs to the CTP synthase family. In terms of assembly, homotetramer.

It catalyses the reaction UTP + L-glutamine + ATP + H2O = CTP + L-glutamate + ADP + phosphate + 2 H(+). The enzyme catalyses L-glutamine + H2O = L-glutamate + NH4(+). It carries out the reaction UTP + NH4(+) + ATP = CTP + ADP + phosphate + 2 H(+). The protein operates within pyrimidine metabolism; CTP biosynthesis via de novo pathway; CTP from UDP: step 2/2. Allosterically activated by GTP, when glutamine is the substrate; GTP has no effect on the reaction when ammonia is the substrate. The allosteric effector GTP functions by stabilizing the protein conformation that binds the tetrahedral intermediate(s) formed during glutamine hydrolysis. Inhibited by the product CTP, via allosteric rather than competitive inhibition. Catalyzes the ATP-dependent amination of UTP to CTP with either L-glutamine or ammonia as the source of nitrogen. Regulates intracellular CTP levels through interactions with the four ribonucleotide triphosphates. This chain is CTP synthase, found in Methanococcus maripaludis (strain DSM 14266 / JCM 13030 / NBRC 101832 / S2 / LL).